We begin with the raw amino-acid sequence, 391 residues long: tRNA (cytosine(38)-C(5))-methyltransferase (391 aa).

The SAM-dependent MTase C5-type domain maps to 4–391 (LRALELYSGI…VAKLIKILCD (388 aa)). S-adenosyl-L-methionine is bound by residues 13–15 (IGG), D34, 57–58 (IE), and S76. Residue C79 is part of the active site. Residue S376 participates in S-adenosyl-L-methionine binding.

Belongs to the class I-like SAM-binding methyltransferase superfamily. C5-methyltransferase family.

The protein resides in the cytoplasm. It carries out the reaction cytidine(38) in tRNA + S-adenosyl-L-methionine = 5-methylcytidine(38) in tRNA + S-adenosyl-L-homocysteine + H(+). In terms of biological role, specifically methylates cytosine 38 in the anticodon loop of tRNA(Asp). Has higher activity on tRNA(Asp) modified with queuosine at position 34. The polypeptide is tRNA (cytosine(38)-C(5))-methyltransferase (TRDMT1) (Bos taurus (Bovine)).